Here is a 36-residue protein sequence, read N- to C-terminus: Photosystem II reaction center protein M (36 aa).

The helical transmembrane segment at isoleucine 5–isoleucine 25 threads the bilayer.

The protein belongs to the PsbM family. PSII is composed of 1 copy each of membrane proteins PsbA, PsbB, PsbC, PsbD, PsbE, PsbF, PsbH, PsbI, PsbJ, PsbK, PsbL, PsbM, PsbT, PsbX, PsbY, PsbZ, Psb30/Ycf12, at least 3 peripheral proteins of the oxygen-evolving complex and a large number of cofactors. It forms dimeric complexes.

The protein localises to the plastid. It localises to the chloroplast thylakoid membrane. In terms of biological role, one of the components of the core complex of photosystem II (PSII). PSII is a light-driven water:plastoquinone oxidoreductase that uses light energy to abstract electrons from H(2)O, generating O(2) and a proton gradient subsequently used for ATP formation. It consists of a core antenna complex that captures photons, and an electron transfer chain that converts photonic excitation into a charge separation. This subunit is found at the monomer-monomer interface. This Panax ginseng (Korean ginseng) protein is Photosystem II reaction center protein M.